The chain runs to 757 residues: Xylosyl- and glucuronyltransferase LARGE1 (757 aa).

The Cytoplasmic portion of the chain corresponds to 1 to 10; sequence MLGMCRGRRK. The chain crosses the membrane as a helical; Signal-anchor for type II membrane protein span at residues 11–31; that stretch reads FVAASLALIFIPALTWLYLSS. Residues 32–757 are Lumenal-facing; sequence ANITVKPLPL…LKYMTVDNNS (726 aa). A coiled-coil region spans residues 50–82; that stretch reads AVVGAAAEHQSLELRLRDVEEHNNALRREISRT. Residues 76–127 are disordered; sequence RREISRTPRVPTHSSHPSSSRHGNQLHTHSTEEGTGDSEAKKGAAAGNSSDC. A compositionally biased stretch (low complexity) spans 82–97; the sequence is TPRVPTHSSHPSSSRH. N-linked (GlcNAc...) asparagine glycans are attached at residues Asn123 and Asn149. The interval 139 to 414 is xylosyltransferase activity; the sequence is IHIAIVCAGY…FLEYDGNLLR (276 aa). Residues Asp243 and Asp245 each coordinate Mn(2+). Asn273 is a glycosylation site (N-linked (GlcNAc...) asparagine). A glucuronyltransferase activity region spans residues 415–757; it reads RELFGCPSET…LKYMTVDNNS (343 aa). Residues Asp564 and Asp566 each contribute to the Mn(2+) site. N-linked (GlcNAc...) asparagine glycosylation occurs at Asn738.

It in the C-terminal section; belongs to the glycosyltransferase 49 family. In the N-terminal section; belongs to the glycosyltransferase 8 family. Mn(2+) is required as a cofactor.

It is found in the golgi apparatus membrane. The catalysed reaction is 3-O-[beta-D-GlcA-(1-&gt;3)-beta-D-Xyl-(1-&gt;4)-Rib-ol-P-Rib-ol-P-3-beta-D-GalNAc-(1-&gt;3)-beta-D-GlcNAc-(1-&gt;4)-(O-6-P-alpha-D-Man)]-Thr-[protein] + UDP-alpha-D-xylose = 3-O-[alpha-D-Xyl-(1-&gt;3)-beta-D-GlcA-(1-&gt;4)-beta-D-Xyl-(1-&gt;4)-Rib-ol-P-Rib-ol-P-3-beta-D-GalNAc-(1-&gt;3)-beta-D-GlcNAc-(1-&gt;4)-(O-6-P-alpha-D-Man)]-Thr-[protein] + UDP + H(+). It catalyses the reaction 3-O-{(1-&gt;[3)-alpha-D-Xyl-(1-&gt;3)-beta-D-GlcA-(1-&gt;](n)-4)-beta-D-Xyl-(1-&gt;4)-Rib-ol-P-Rib-ol-P-3-beta-D-GalNAc-(1-&gt;3)-beta-D-GlcNAc-(1-&gt;4)-O-6-P-alpha-D-Man}-L-Thr-[protein] + UDP-alpha-D-glucuronate = 3-O-{beta-D-GlcA-(1-&gt;[3)-alpha-D-Xyl-(1-&gt;3)-beta-D-GlcA-(1-&gt;](n)-4)-beta-D-Xyl-(1-&gt;4)-Rib-ol-P-Rib-ol-P-3-beta-D-GalNAc-(1-&gt;3)-beta-D-GlcNAc-(1-&gt;4)-O-6-P-alpha-D-Man}-L-Thr-[protein] + UDP + H(+). It carries out the reaction 3-O-{beta-D-GlcA-(1-&gt;[3)-alpha-D-Xyl-(1-&gt;3)-beta-D-GlcA-(1-&gt;](n)-4)-beta-D-Xyl-(1-&gt;4)-Rib-ol-P-Rib-ol-P-3-beta-D-GalNAc-(1-&gt;3)-beta-D-GlcNAc-(1-&gt;4)-O-6-P-alpha-D-Man}-L-Thr-[protein] + UDP-alpha-D-xylose = 3-O-{(1-&gt;[3)-alpha-D-Xyl-(1-&gt;3)-beta-D-GlcA-(1-&gt;](n+1)-4)-beta-D-Xyl-(1-&gt;4)-Rib-ol-P-Rib-ol-P-3-beta-D-GalNAc-(1-&gt;3)-beta-D-GlcNAc-(1-&gt;4)-O-6-P-alpha-D-Man}-L-Thr-[protein] + UDP + H(+). It participates in protein modification; protein glycosylation. Bifunctional glycosyltransferase with both alpha-1,3-xylosyltransferase and beta-1,3-glucuronyltransferase activities involved in the maturation of alpha-dystroglycan (DAG1) by glycosylation leading to DAG1 binding to laminin G-like domain-containing extracellular proteins with high affinity. Elongates the glucuronyl-beta-1,4-xylose-beta disaccharide primer structure initiated by B4GAT1 by adding repeating units [-3-Xylose-alpha-1,3-GlcA-beta-1-] to produce a heteropolysaccharide. Requires the phosphorylation of core M3 (O-mannosyl trisaccharide) by POMK to elongate the glucuronyl-beta-1,4-xylose-beta disaccharide primer. Plays a key role in skeletal muscle function and regeneration. The sequence is that of Xylosyl- and glucuronyltransferase LARGE1 from Danio rerio (Zebrafish).